The primary structure comprises 827 residues: Protein SEY1 (827 aa).

The interval 1 to 26 is disordered; the sequence is MSQSSPSNAETDEDLSTTSSSSSFVP. Over 1-719 the chain is Cytoplasmic; sequence MSQSSPSNAE…KRSIVQHVTQ (719 aa). The GB1/RHD3-type G domain occupies 63–291; the sequence is GNNYHIISVF…VKKDLFRPNY (229 aa). Position 73 to 80 (73 to 80) interacts with GTP; that stretch reads GSQSTGKS. Coiled coils occupy residues 389–409 and 472–492; these read KSVY…KFRE and VSNL…VELK. A helical transmembrane segment spans residues 720-740; that stretch reads IPYYIYLVIMVLGWNEFMAIV. Over 741–743 the chain is Lumenal; that stretch reads RNP. A helical transmembrane segment spans residues 744-764; sequence LFFSLVLVFGAGLYILYSMNL. The Cytoplasmic portion of the chain corresponds to 765–827; sequence LKPAMVVVQR…VVETIEMQDL (63 aa). Residues 803–823 are a coiled coil; sequence QKISASNREKVEEEKVVETIE.

It belongs to the TRAFAC class dynamin-like GTPase superfamily. GB1/RHD3 GTPase family. RHD3 subfamily.

It localises to the endoplasmic reticulum membrane. Cooperates with the reticulon proteins and tubule-shaping DP1 family proteins to generate and maintain the structure of the tubular endoplasmic reticulum network. Has GTPase activity, which is required for its function in ER organization. The protein is Protein SEY1 of Scheffersomyces stipitis (strain ATCC 58785 / CBS 6054 / NBRC 10063 / NRRL Y-11545) (Yeast).